The sequence spans 364 residues: Ribosomal RNA small subunit methyltransferase H (364 aa).

S-adenosyl-L-methionine-binding positions include 55 to 57, Asp-75, Phe-101, Asp-122, and Gln-129; that span reads GGH. Residues 333–364 form a disordered region; it reads LPPGGGAGFVKAGRVPGEPVRGTRAGSKGRRR.

This sequence belongs to the methyltransferase superfamily. RsmH family.

The protein localises to the cytoplasm. The enzyme catalyses cytidine(1402) in 16S rRNA + S-adenosyl-L-methionine = N(4)-methylcytidine(1402) in 16S rRNA + S-adenosyl-L-homocysteine + H(+). In terms of biological role, specifically methylates the N4 position of cytidine in position 1402 (C1402) of 16S rRNA. This chain is Ribosomal RNA small subunit methyltransferase H, found in Bordetella bronchiseptica (strain ATCC BAA-588 / NCTC 13252 / RB50) (Alcaligenes bronchisepticus).